A 199-amino-acid chain; its full sequence is dITP/XTP pyrophosphatase (199 aa).

7-12 lines the substrate pocket; it reads SNNPGK. The Proton acceptor role is filled by Asp68. Mg(2+) is bound at residue Asp68. Residues Ala69, 154 to 157, Lys177, and 182 to 183 contribute to the substrate site; these read FGFD and HR.

The protein belongs to the HAM1 NTPase family. As to quaternary structure, homodimer. Mg(2+) is required as a cofactor.

The enzyme catalyses XTP + H2O = XMP + diphosphate + H(+). It catalyses the reaction dITP + H2O = dIMP + diphosphate + H(+). The catalysed reaction is ITP + H2O = IMP + diphosphate + H(+). In terms of biological role, pyrophosphatase that catalyzes the hydrolysis of nucleoside triphosphates to their monophosphate derivatives, with a high preference for the non-canonical purine nucleotides XTP (xanthosine triphosphate), dITP (deoxyinosine triphosphate) and ITP. Seems to function as a house-cleaning enzyme that removes non-canonical purine nucleotides from the nucleotide pool, thus preventing their incorporation into DNA/RNA and avoiding chromosomal lesions. The protein is dITP/XTP pyrophosphatase of Verminephrobacter eiseniae (strain EF01-2).